The sequence spans 299 residues: MPT51/MPB51 antigen (299 aa).

A signal peptide spans 1–26 (MKGRSALLRALWIAALSFGLGGVAVA).

The protein belongs to the mycobacterial A85 antigen family. In terms of assembly, homodimer.

It is found in the secreted. Its function is as follows. May have a role in host tissue attachment, whereby ligands may include the serum protein fibronectin and small sugars. The polypeptide is MPT51/MPB51 antigen (mpt51) (Mycobacterium bovis (strain ATCC BAA-935 / AF2122/97)).